Here is a 322-residue protein sequence, read N- to C-terminus: Adenine deaminase (322 aa).

3 residues coordinate Zn(2+): His-11, His-13, and His-189. The active-site Proton donor is Glu-192. Residue Asp-270 participates in Zn(2+) binding. Residue Asp-271 coordinates substrate.

It belongs to the metallo-dependent hydrolases superfamily. Adenosine and AMP deaminases family. Adenine deaminase type 2 subfamily. The cofactor is Zn(2+).

It catalyses the reaction adenine + H2O + H(+) = hypoxanthine + NH4(+). In terms of biological role, catalyzes the hydrolytic deamination of adenine to hypoxanthine. Plays an important role in the purine salvage pathway and in nitrogen catabolism. This chain is Adenine deaminase, found in Rhizobium leguminosarum bv. trifolii (strain WSM2304).